We begin with the raw amino-acid sequence, 432 residues long: MSAYSPLSAQLDADTDVDVESTRTEGRRKMEWTLQHMPILQELRARFAETKPLAGETIGMAMHVEAKTANLVELLALGGAEVAITGCNPLSTHDDVSAALDSNENVTSYAKRGVDEEAYYDAIEAVVAHEPTITIDDGMDMVYAIHEDHPDLLDTIIGGAEETTTGVHRLRAMDEDDELQYPVFAVNDTPMKRLFDNVHGTGESALATIAMTTNLSYAGKNVVVAGYGYCGKGVAQKAAGQNANVIVTEVEPRRALEAHMEGYEVMPMNEAATRGDVFVTTTGNRDVITQEDFEVMSDGAILANAGHFDVEINLEELSELAIDTYEARDGVQAYELADGRRLNVLAEGRLVNLAAPIALGHPAEVMDQSFGIQAVCVRELIENKSSYDAGVHNVPDELDREVAEIKLEAEGVDIDSLTQTQSEYLDSWSHGT.

The tract at residues 1 to 24 is disordered; it reads MSAYSPLSAQLDADTDVDVESTRT. 2 residues coordinate substrate: Asp137 and Glu162. 163-165 provides a ligand contact to NAD(+); the sequence is TTT. 2 residues coordinate substrate: Lys192 and Asp196. NAD(+) contacts are provided by residues Asn197, 226–231, Glu249, Asn284, 305–307, and Asn352; these read GYGYCG and AGH.

This sequence belongs to the adenosylhomocysteinase family. NAD(+) serves as cofactor.

It is found in the cytoplasm. The enzyme catalyses S-adenosyl-L-homocysteine + H2O = L-homocysteine + adenosine. It functions in the pathway amino-acid biosynthesis; L-homocysteine biosynthesis; L-homocysteine from S-adenosyl-L-homocysteine: step 1/1. In terms of biological role, may play a key role in the regulation of the intracellular concentration of adenosylhomocysteine. The protein is Adenosylhomocysteinase of Haloquadratum walsbyi (strain DSM 16854 / JCM 12705 / C23).